The following is a 505-amino-acid chain: MQRIIGTEVEYGISSPSDPTANPILTSTQAVLAYAAAAGIQRAKRTRWDYEVESPLRDARGFDLSRSAGPPPVVDADEVGAANMILTNGARLYVDHAHPEYSAPECTDPLDAVIWDKAGERVMEAAARHVASVPGAAKLQLYKNNVDGKGASYGSHENYLMSRQTPFSAIITGLTPFLVSRQVVTGSGRVGIGPSGDEPGFQLSQRSDYIEVEVGLETTLKRGIINTRDEPHADADRYRRLHVIIGDANLAETSTYLKLGTTALVLDLIEEGPAHAIDLTDLALARPVHAVHAISRDPSLRATVALADGRELTGLALQRIYLDRVAKLVDSRDPDPRAADIVETWAHVLDQLERDPMDCAELLDWPAKLRLLDGFRQRENLSWSAPRLHLVDLQYSDVRLDKGLYNRLVARGSMKRLVTEHQVLSAVENPPTDTRAYFRGECLRRFGADIAAASWDSVIFDLGGDSLVRIPTLEPLRGSKAHVGALLDSVDSAVELVEQLTAEPR.

6-10 (GTEVE) is an ATP binding site. Mg(2+) is bound by residues Glu8 and Tyr93. Asp95 serves as the catalytic Proton acceptor. Glu100 serves as a coordination point for Mg(2+). ATP is bound at residue 102–103 (SA). A Mg(2+)-binding site is contributed by His156. 2 residues coordinate ATP: Asn158 and Arg240. Mg(2+) is bound at residue His242.

Belongs to the Pup ligase/Pup deamidase family. Pup deamidase subfamily. In terms of assembly, interacts with the prokaryotic ubiquitin-like protein Pup. ATP is required as a cofactor.

The catalysed reaction is [prokaryotic ubiquitin-like protein]-C-terminal-L-glutamine + H2O = [prokaryotic ubiquitin-like protein]-C-terminal-L-glutamate + NH4(+). Its pathway is protein degradation; proteasomal Pup-dependent pathway. In terms of biological role, specifically catalyzes the deamidation of the C-terminal glutamine of the prokaryotic ubiquitin-like protein Pup to glutamate, thereby rendering Pup competent for conjugation. Also displays depupylase (DPUP) activity, removing conjugated Pup from target proteins; is thus involved in the recycling of Pup and may function similarly to deubiquitinases (DUBs) in eukaryotes to prevent or promote proteasomal degradation of certain proteins. The sequence is that of Pup deamidase/depupylase (dop) from Mycobacterium tuberculosis (strain CDC 1551 / Oshkosh).